A 101-amino-acid chain; its full sequence is Large ribosomal subunit protein uL24 (101 aa).

It belongs to the universal ribosomal protein uL24 family. Part of the 50S ribosomal subunit.

Functionally, one of two assembly initiator proteins, it binds directly to the 5'-end of the 23S rRNA, where it nucleates assembly of the 50S subunit. Its function is as follows. One of the proteins that surrounds the polypeptide exit tunnel on the outside of the subunit. The protein is Large ribosomal subunit protein uL24 of Ruegeria sp. (strain TM1040) (Silicibacter sp.).